The primary structure comprises 324 residues: DNA repair and recombination protein RadA (324 aa).

Residue G107–S114 participates in ATP binding.

Belongs to the eukaryotic RecA-like protein family.

In terms of biological role, involved in DNA repair and in homologous recombination. Binds and assemble on single-stranded DNA to form a nucleoprotein filament. Hydrolyzes ATP in a ssDNA-dependent manner and promotes DNA strand exchange between homologous DNA molecules. The protein is DNA repair and recombination protein RadA of Methanoculleus marisnigri (strain ATCC 35101 / DSM 1498 / JR1).